The sequence spans 28 residues: Ranatuerin-2BYb (28 aa).

Cysteine 23 and cysteine 28 are joined by a disulfide.

Expressed by the skin glands.

It localises to the secreted. Antibacterial activity against Gram-negative bacterium E.coli. Very weak hemolysis activity. The protein is Ranatuerin-2BYb of Rana boylii (Foothill yellow-legged frog).